We begin with the raw amino-acid sequence, 236 residues long: MRTPWAAMHQPAFVLHSRPYKESSALVDLFTPQGRLRAVMRAARGKAGSLIRPFVSLEVELRGKSELKTVARLESAGPAHWLDGQALFSGMYLNELLIRLLPAEDAHPALFEHYVATLPALAEHRPLEPLLRAFEWRLLDELGYGFALDIDIAGQPIDAQRLYRLVPDAGLEPVVGFQPGLFNGAELLAMAEADWQVPGALAAAKRLMRQALAPHLGGRPLVSRELFMNLKESPRD.

It belongs to the RecO family.

Involved in DNA repair and RecF pathway recombination. The chain is DNA repair protein RecO from Stutzerimonas stutzeri (strain A1501) (Pseudomonas stutzeri).